Reading from the N-terminus, the 116-residue chain is UPF0102 protein IL0423 (116 aa).

The protein belongs to the UPF0102 family.

This Idiomarina loihiensis (strain ATCC BAA-735 / DSM 15497 / L2-TR) protein is UPF0102 protein IL0423.